The chain runs to 218 residues: Thiopurine S-methyltransferase (218 aa).

S-adenosyl-L-methionine contacts are provided by tryptophan 10, leucine 45, glutamate 66, and arginine 123.

It belongs to the class I-like SAM-binding methyltransferase superfamily. TPMT family.

It is found in the cytoplasm. It carries out the reaction S-adenosyl-L-methionine + a thiopurine = S-adenosyl-L-homocysteine + a thiopurine S-methylether.. This is Thiopurine S-methyltransferase from Xanthomonas campestris pv. campestris (strain 8004).